Consider the following 444-residue polypeptide: Methylenetetrahydrofolate--tRNA-(uracil-5-)-methyltransferase TrmFO (444 aa).

9-14 (GAGMAG) is a binding site for FAD.

This sequence belongs to the MnmG family. TrmFO subfamily. The cofactor is FAD.

It is found in the cytoplasm. It catalyses the reaction uridine(54) in tRNA + (6R)-5,10-methylene-5,6,7,8-tetrahydrofolate + NADH + H(+) = 5-methyluridine(54) in tRNA + (6S)-5,6,7,8-tetrahydrofolate + NAD(+). It carries out the reaction uridine(54) in tRNA + (6R)-5,10-methylene-5,6,7,8-tetrahydrofolate + NADPH + H(+) = 5-methyluridine(54) in tRNA + (6S)-5,6,7,8-tetrahydrofolate + NADP(+). Catalyzes the folate-dependent formation of 5-methyl-uridine at position 54 (M-5-U54) in all tRNAs. The protein is Methylenetetrahydrofolate--tRNA-(uracil-5-)-methyltransferase TrmFO of Cereibacter sphaeroides (strain ATCC 17029 / ATH 2.4.9) (Rhodobacter sphaeroides).